The sequence spans 122 residues: Cytochrome c-556 (122 aa).

Positions 11, 111, 114, and 115 each coordinate heme. Residues Met-11, Cys-111, Cys-114, and His-115 each contribute to the heme c site.

As to quaternary structure, monomer. Post-translationally, binds 1 heme c group covalently per subunit.

In terms of biological role, low-spin monoheme cytochrome c. This is Cytochrome c-556 from Agrobacterium tumefaciens (strain B2A).